The primary structure comprises 310 residues: Proline iminopeptidase (310 aa).

The AB hydrolase-1 domain occupies P33–F290. Residue S107 is the Nucleophile of the active site. The active site involves D260. H287 (proton donor) is an active-site residue.

Belongs to the peptidase S33 family.

Its subcellular location is the cytoplasm. It catalyses the reaction Release of N-terminal proline from a peptide.. Its function is as follows. Specifically catalyzes the removal of N-terminal proline residues from peptides. In Neisseria meningitidis serogroup B (strain ATCC BAA-335 / MC58), this protein is Proline iminopeptidase (pip).